Here is a 783-residue protein sequence, read N- to C-terminus: E3 UFM1-protein ligase 1 homolog (783 aa).

Residues 406 to 476 form a disordered region; that stretch reads TLGTTHDADE…DAVQQSANSS (71 aa). Residues 446–457 are compositionally biased toward basic residues; it reads KSTKKHQRGRAA.

The protein belongs to the UFL1 family.

In terms of biological role, E3 UFM1-protein ligase that mediates ufmylation of target proteins. This is E3 UFM1-protein ligase 1 homolog from Drosophila grimshawi (Hawaiian fruit fly).